The primary structure comprises 184 residues: NADH-quinone oxidoreductase subunit B (184 aa).

Cys37, Cys38, Cys103, and Cys132 together coordinate [4Fe-4S] cluster.

It belongs to the complex I 20 kDa subunit family. NDH-1 is composed of 14 different subunits. Subunits NuoB, C, D, E, F, and G constitute the peripheral sector of the complex. Requires [4Fe-4S] cluster as cofactor.

Its subcellular location is the cell membrane. The catalysed reaction is a quinone + NADH + 5 H(+)(in) = a quinol + NAD(+) + 4 H(+)(out). NDH-1 shuttles electrons from NADH, via FMN and iron-sulfur (Fe-S) centers, to quinones in the respiratory chain. The immediate electron acceptor for the enzyme in this species is believed to be a menaquinone. Couples the redox reaction to proton translocation (for every two electrons transferred, four hydrogen ions are translocated across the cytoplasmic membrane), and thus conserves the redox energy in a proton gradient. The chain is NADH-quinone oxidoreductase subunit B from Beutenbergia cavernae (strain ATCC BAA-8 / DSM 12333 / CCUG 43141 / JCM 11478 / NBRC 16432 / NCIMB 13614 / HKI 0122).